Reading from the N-terminus, the 290-residue chain is Aquaporin PIP2-1 (290 aa).

Residues Met1 to Asp20 are disordered. 2 helical membrane-spanning segments follow: residues Ala43 to Ile63 and Cys80 to Val100. Residues Asn112–Ala114 carry the NPA 1 motif. Helical transmembrane passes span Leu131–Phe151, Gly173–Ala193, and Val205–Ile225. The NPA 2 signature appears at Asn233–Ala235. A helical transmembrane segment spans residues Ile255–Leu275.

It belongs to the MIP/aquaporin (TC 1.A.8) family. PIP (TC 1.A.8.11) subfamily. As to quaternary structure, homomers. Can interact with PIP1-2 to form heteromers. In terms of tissue distribution, expressed in roots.

The protein resides in the cell membrane. Its function is as follows. Water channel required to facilitate the transport of water across cell membrane. Active as homomers. Increased activity when heteromerization with PIP1-2. This chain is Aquaporin PIP2-1 (PIP2-1), found in Zea mays (Maize).